Reading from the N-terminus, the 227-residue chain is Cytochrome c oxidase subunit 2 (227 aa).

Over 1–14 the chain is Mitochondrial intermembrane; it reads MAYPMQLGLQDATS. Residues 15–45 form a helical membrane-spanning segment; that stretch reads PIMEELTDFHDHTLMIVFLISTLVLYIISMM. Residues 46–59 are Mitochondrial matrix-facing; it reads LTTKLTHTSTMDAQ. The chain crosses the membrane as a helical span at residues 60-87; it reads EVETIWTVLPAVILVMIALPSLRILYMM. Residues 88–227 are Mitochondrial intermembrane-facing; that stretch reads DEINDPYLTV…QFESWASSMT (140 aa). Residues His161, Cys196, Glu198, Cys200, His204, and Met207 each coordinate Cu cation. Glu198 is a binding site for Mg(2+).

Belongs to the cytochrome c oxidase subunit 2 family. Component of the cytochrome c oxidase (complex IV, CIV), a multisubunit enzyme composed of 14 subunits. The complex is composed of a catalytic core of 3 subunits MT-CO1, MT-CO2 and MT-CO3, encoded in the mitochondrial DNA, and 11 supernumerary subunits COX4I, COX5A, COX5B, COX6A, COX6B, COX6C, COX7A, COX7B, COX7C, COX8 and NDUFA4, which are encoded in the nuclear genome. The complex exists as a monomer or a dimer and forms supercomplexes (SCs) in the inner mitochondrial membrane with NADH-ubiquinone oxidoreductase (complex I, CI) and ubiquinol-cytochrome c oxidoreductase (cytochrome b-c1 complex, complex III, CIII), resulting in different assemblies (supercomplex SCI(1)III(2)IV(1) and megacomplex MCI(2)III(2)IV(2)). Found in a complex with TMEM177, COA6, COX18, COX20, SCO1 and SCO2. Interacts with TMEM177 in a COX20-dependent manner. Interacts with COX20. Interacts with COX16. Cu cation serves as cofactor.

It localises to the mitochondrion inner membrane. It carries out the reaction 4 Fe(II)-[cytochrome c] + O2 + 8 H(+)(in) = 4 Fe(III)-[cytochrome c] + 2 H2O + 4 H(+)(out). Its function is as follows. Component of the cytochrome c oxidase, the last enzyme in the mitochondrial electron transport chain which drives oxidative phosphorylation. The respiratory chain contains 3 multisubunit complexes succinate dehydrogenase (complex II, CII), ubiquinol-cytochrome c oxidoreductase (cytochrome b-c1 complex, complex III, CIII) and cytochrome c oxidase (complex IV, CIV), that cooperate to transfer electrons derived from NADH and succinate to molecular oxygen, creating an electrochemical gradient over the inner membrane that drives transmembrane transport and the ATP synthase. Cytochrome c oxidase is the component of the respiratory chain that catalyzes the reduction of oxygen to water. Electrons originating from reduced cytochrome c in the intermembrane space (IMS) are transferred via the dinuclear copper A center (CU(A)) of subunit 2 and heme A of subunit 1 to the active site in subunit 1, a binuclear center (BNC) formed by heme A3 and copper B (CU(B)). The BNC reduces molecular oxygen to 2 water molecules using 4 electrons from cytochrome c in the IMS and 4 protons from the mitochondrial matrix. This chain is Cytochrome c oxidase subunit 2 (MT-CO2), found in Cratogeomys bursarius (Plains pocket gopher).